A 1040-amino-acid chain; its full sequence is Neprilysin-4 (1040 aa).

Residues 1–27 are disordered; the sequence is MSRHSQLKLAMPSVHGAPATAPGSPMN. Residues 1-45 form a required for maintaining muscle integrity region; that stretch reads MSRHSQLKLAMPSVHGAPATAPGSPMNAKARSVKLGLGVNQRTGR. Residues 1 to 55 lie on the Cytoplasmic side of the membrane; that stretch reads MSRHSQLKLAMPSVHGAPATAPGSPMNAKARSVKLGLGVNQRTGRVQWCPGLTCC. The chain crosses the membrane as a helical; Signal-anchor for type II membrane protein span at residues 56 to 76; that stretch reads KMLLLLPVVMLPLTLVLILIM. Residues 77–1040 lie on the Extracellular side of the membrane; the sequence is RLDGMLAALQ…MNPQKKCSVW (964 aa). Residues 251–1040 enclose the Peptidase M13 domain; it reads EEGTREGIRM…MNPQKKCSVW (790 aa). 4 cysteine pairs are disulfide-bonded: cysteine 277/cysteine 1025, cysteine 285/cysteine 985, cysteine 452/cysteine 700, and cysteine 909/cysteine 1037. N-linked (GlcNAc...) asparagine glycosylation is found at asparagine 387, asparagine 593, asparagine 723, and asparagine 819. Histidine 872 is a binding site for Zn(2+). The active site involves glutamate 873. Histidine 876 contacts Zn(2+). N-linked (GlcNAc...) asparagine glycosylation is present at asparagine 916. Glutamate 934 serves as a coordination point for Zn(2+). Residue aspartate 938 is the Proton donor of the active site. Asparagine 969 carries N-linked (GlcNAc...) asparagine glycosylation.

Belongs to the peptidase M13 family. In terms of assembly, interacts (via intracellular domain) with the putative carbohydrate kinase CG3534. It depends on Zn(2+) as a cofactor. In terms of tissue distribution, expressed in the gonads and testes of adults, and the adult and larval brain (at protein level). In embryos, expressed in the pericardial, muscle founder and glia cells (at protein level). In stage 12 embryos, expressed in specific dorsal muscle founder cells such as DA1 and DO2, and also in the certain pericardial progenitor cells where expression persists throughout embryogenesis. Expressed in the glia cells of the embryonic, larval and adult central nervous system. Expressed in the somatic muscles of larvae, pupae and adults. Isoform A: Detected in the male abdomen (at protein level). Isoform B: Not detected in the male or female abdomen (at protein level).

Its subcellular location is the cell membrane. It localises to the sarcoplasmic reticulum. The protein resides in the cytoplasm. It carries out the reaction Preferential cleavage of polypeptides between hydrophobic residues, particularly with Phe or Tyr at P1'.. In terms of biological role, metalloendoprotease which cleaves peptides at the amino side of hydrophobic residues - such as the hormones Akh and Dh31, and the neuropeptides Allatostatins (AST1, AST2, AST3 and AST4), Crz, Drosulfakinins (DSK-I and DSK-II), Lk, sNPF and the tachykinin peptides TK-1, TK-2, TK-4 and TK-5. Functions in female fertility, memory formation and may also act in regulating insulin signaling and food intake. Likely to be involved in controlling feeding behavior and the expression of insulin-like peptides by cleaving various regulatory peptides that include certain Drosulfakinins, Allatostatins and tachykinin peptides. Required in females for normal patterns of egg laying and hatching. Required in the dorsal paired medial neurons for the proper formation of long-term (LTM) and middle-term memories (MTM). Also required in the mushroom body neurons where it functions redundantly with neprilysins Nep2 and Nep3, in normal LTM formation. Functionally, cleaves angiotensin-1 and tachykinin neuropeptide substance P. Functions in maintaining muscle integrity, possibly independently of its endopeptidase activity. This is Neprilysin-4 from Drosophila melanogaster (Fruit fly).